Here is a 958-residue protein sequence, read N- to C-terminus: Dermatan-sulfate epimerase (958 aa).

Positions 1–22 (MRTHTRGAPSVFFICLFCFVSA) are cleaved as a signal peptide. Residues 23-902 (CVTDENPEVM…APALSASYTR (880 aa)) lie on the Lumenal side of the membrane. An N-linked (GlcNAc...) asparagine glycan is attached at Asn183. His205 functions as the Proton donor in the catalytic mechanism. Tyr261 is an active-site residue. N-linked (GlcNAc...) asparagine glycosylation is found at Asn336 and Asn411. Mn(2+) contacts are provided by His452 and Glu470. Tyr473 is a catalytic residue. Asn481 serves as a coordination point for Mn(2+). N-linked (GlcNAc...) asparagine glycans are attached at residues Asn642 and Asn648. The helical transmembrane segment at 903-923 (LFLILNIAIFFVMLAMQLTYF) threads the bilayer. Topologically, residues 924–933 (QRAQSLHGQR) are cytoplasmic. A helical transmembrane segment spans residues 934–954 (CLYAVLLIDSCILLWLYSSCS). At 955–958 (QSQC) the chain is on the lumenal side.

Belongs to the dermatan-sulfate isomerase family. Requires Mn(2+) as cofactor. Post-translationally, N-glycosylated. Glycosylation is important for enzymatic activity.

The protein localises to the endoplasmic reticulum membrane. Its subcellular location is the golgi apparatus membrane. The protein resides in the cytoplasmic vesicle membrane. It is found in the microsome membrane. It catalyses the reaction chondroitin 4'-sulfate = dermatan 4'-sulfate. The protein operates within glycan metabolism; chondroitin sulfate biosynthesis. It functions in the pathway glycan metabolism; heparan sulfate biosynthesis. Functionally, converts D-glucuronic acid to L-iduronic acid (IdoUA) residues. Plays an important role in the biosynthesis of the glycosaminoglycan/mucopolysaccharide dermatan sulfate. The polypeptide is Dermatan-sulfate epimerase (DSE) (Bos taurus (Bovine)).